A 204-amino-acid chain; its full sequence is Somatotropin (204 aa).

An N-terminal signal peptide occupies residues 1–17; the sequence is MNSVVLLLSVVCLGVSS. Gln18 carries the post-translational modification Pyrrolidone carboxylic acid. Position 36 (His36) interacts with Zn(2+). A disulfide bond links Cys69 and Cys177. Glu186 provides a ligand contact to Zn(2+). A disulfide bridge links Cys194 with Cys202.

This sequence belongs to the somatotropin/prolactin family.

It is found in the secreted. Growth hormone plays an important role in growth control and involved in the regulation of several anabolic processes. The chain is Somatotropin (gh) from Oreochromis niloticus (Nile tilapia).